We begin with the raw amino-acid sequence, 440 residues long: Proline--tRNA ligase (440 aa).

This sequence belongs to the class-II aminoacyl-tRNA synthetase family. ProS type 2 subfamily. In terms of assembly, homodimer.

It localises to the cytoplasm. The enzyme catalyses tRNA(Pro) + L-proline + ATP = L-prolyl-tRNA(Pro) + AMP + diphosphate. Its function is as follows. Catalyzes the attachment of proline to tRNA(Pro) in a two-step reaction: proline is first activated by ATP to form Pro-AMP and then transferred to the acceptor end of tRNA(Pro). The protein is Proline--tRNA ligase of Azorhizobium caulinodans (strain ATCC 43989 / DSM 5975 / JCM 20966 / LMG 6465 / NBRC 14845 / NCIMB 13405 / ORS 571).